Consider the following 375-residue polypeptide: Probable pectin lyase D (375 aa).

An N-terminal signal peptide occupies residues 1–19 (MKYAAVLTTVAALASRALG). 2 disulfides stabilise this stretch: C82-C101 and C91-C225. N-linked (GlcNAc...) asparagine glycosylation occurs at N128. Residue R255 is part of the active site. A disulfide bond links C321 and C329.

This sequence belongs to the polysaccharide lyase 1 family.

Its subcellular location is the secreted. The catalysed reaction is Eliminative cleavage of (1-&gt;4)-alpha-D-galacturonan methyl ester to give oligosaccharides with 4-deoxy-6-O-methyl-alpha-D-galact-4-enuronosyl groups at their non-reducing ends.. Pectinolytic enzymes consist of four classes of enzymes: pectin lyase, polygalacturonase, pectin methylesterase and rhamnogalacturonase. Among pectinolytic enzymes, pectin lyase is the most important in depolymerization of pectin, since it cleaves internal glycosidic bonds of highly methylated pectins. The protein is Probable pectin lyase D (pelD) of Aspergillus flavus (strain ATCC 200026 / FGSC A1120 / IAM 13836 / NRRL 3357 / JCM 12722 / SRRC 167).